A 47-amino-acid polypeptide reads, in one-letter code: Large ribosomal subunit protein bL34 (47 aa).

The protein belongs to the bacterial ribosomal protein bL34 family.

This chain is Large ribosomal subunit protein bL34, found in Rhodococcus opacus (strain B4).